We begin with the raw amino-acid sequence, 89 residues long: Small ribosomal subunit protein uS15 (89 aa).

Belongs to the universal ribosomal protein uS15 family. Part of the 30S ribosomal subunit. Forms a bridge to the 50S subunit in the 70S ribosome, contacting the 23S rRNA.

Functionally, one of the primary rRNA binding proteins, it binds directly to 16S rRNA where it helps nucleate assembly of the platform of the 30S subunit by binding and bridging several RNA helices of the 16S rRNA. Its function is as follows. Forms an intersubunit bridge (bridge B4) with the 23S rRNA of the 50S subunit in the ribosome. This Desulfosudis oleivorans (strain DSM 6200 / JCM 39069 / Hxd3) (Desulfococcus oleovorans) protein is Small ribosomal subunit protein uS15.